Reading from the N-terminus, the 204-residue chain is Histone chaperone ASF1A (204 aa).

The segment at 1–156 is interaction with histone H3, CHAF1B, and HIRA; the sequence is MAKVQVNNVV…TRFHINWEDN (156 aa). The short motif at 31–37 is the Required for interaction with HIRA element; it reads IEDLSED. Residues 155-204 form a required for interaction with HIRA region; sequence DNTEKLEDAESSNPNLQSLLSTDALPSASKGWSTSENSLNVMLESHMDCM. S192 is subject to Phosphoserine.

The protein belongs to the ASF1 family. Interacts with histone H3 (via C-terminus), including histone H3.1, H3.2 and H3.3, and histone H4; the interaction with H3 is direct. Probably interacts with the heterodimeric form of H3-H4 taking the place of the second dimer. Interacts with the CHAF1A, CHAF1B and RBBP4 subunits of the CAF-1 complex. Interacts with CABIN1, HAT1, HIRA, NASP, TAF1 and UBN1. Found in a soluble complex with NASP and histones H3 and H4; the interaction with NASP is probably indirect and mediated by H3-H4. Interacts with CDAN1. Found in a cytosolic complex with IPO4 and histones H3 and H4. Interacts with CREBBP. In terms of processing, phosphorylated by TLK1 and TLK2. Highly phosphorylated in S-phase and at lower levels in M-phase. TLK2-mediated phosphorylation at Ser-192 prevents proteasome-dependent degradation. Phosphorylation at Ser-192 by PRKDC in response to DNA damage promotes the histone chaperone activity and ability to replace histones at double-strand breaks (DSBs) at stalled or collapsed replication forks, leading to RAD51 recruitment.

Its subcellular location is the nucleus. It is found in the chromosome. Histone chaperone that facilitates histone deposition and histone exchange and removal during nucleosome assembly and disassembly. Cooperates with chromatin assembly factor 1 (CAF-1) to promote replication-dependent chromatin assembly and with HIRA to promote replication-independent chromatin assembly. Promotes homologous recombination-mediated repair of double-strand breaks (DSBs) at stalled or collapsed replication forks: acts by mediating histone replacement at DSBs, leading to recruitment of the MMS22L-TONSL complex and subsequent loading of RAD51. Also involved in the nuclear import of the histone H3-H4 dimer together with importin-4 (IPO4): specifically recognizes and binds newly synthesized histones with the monomethylation of H3 'Lys-9' and acetylation at 'Lys-14' (H3K9me1K14ac) marks, and diacetylation at 'Lys-5' and 'Lys-12' of H4 (H4K5K12ac) marks in the cytosol. Required for the formation of senescence-associated heterochromatin foci (SAHF) and efficient senescence-associated cell cycle exit. The protein is Histone chaperone ASF1A of Mus musculus (Mouse).